The chain runs to 391 residues: Phosphoglycerate kinase (391 aa).

Substrate contacts are provided by residues 21-23 (DLN), R36, 59-62 (HRGR), R113, and R146. Residues K197, E314, and 340–343 (GGDT) each bind ATP.

It belongs to the phosphoglycerate kinase family. As to quaternary structure, monomer.

Its subcellular location is the cytoplasm. It catalyses the reaction (2R)-3-phosphoglycerate + ATP = (2R)-3-phospho-glyceroyl phosphate + ADP. It participates in carbohydrate degradation; glycolysis; pyruvate from D-glyceraldehyde 3-phosphate: step 2/5. This Ruthia magnifica subsp. Calyptogena magnifica protein is Phosphoglycerate kinase.